The following is an 859-amino-acid chain: Protein translocase subunit SecA (859 aa).

ATP is bound by residues Gln88, 106 to 110 (GEGKT), and Asp496. Residues 818-838 (FSHQPQSEVKVSRNDPCPCGS) are disordered. Zn(2+) is bound by residues Cys834, Cys836, Cys845, and Cys846.

This sequence belongs to the SecA family. As to quaternary structure, monomer and homodimer. Part of the essential Sec protein translocation apparatus which comprises SecA, SecYEG and auxiliary proteins SecDF-YajC and YidC. The cofactor is Zn(2+).

Its subcellular location is the cell inner membrane. The protein localises to the cytoplasm. The enzyme catalyses ATP + H2O + cellular proteinSide 1 = ADP + phosphate + cellular proteinSide 2.. Functionally, part of the Sec protein translocase complex. Interacts with the SecYEG preprotein conducting channel. Has a central role in coupling the hydrolysis of ATP to the transfer of proteins into and across the cell membrane, serving as an ATP-driven molecular motor driving the stepwise translocation of polypeptide chains across the membrane. This chain is Protein translocase subunit SecA, found in Wolinella succinogenes (strain ATCC 29543 / DSM 1740 / CCUG 13145 / JCM 31913 / LMG 7466 / NCTC 11488 / FDC 602W) (Vibrio succinogenes).